A 32-amino-acid chain; its full sequence is Cytochrome b6-f complex subunit 7 (32 aa).

Residues alanine 9–leucine 27 traverse the membrane as a helical segment.

It belongs to the PetM family. As to quaternary structure, the 4 large subunits of the cytochrome b6-f complex are cytochrome b6, subunit IV (17 kDa polypeptide, PetD), cytochrome f and the Rieske protein, while the 4 small subunits are PetG, PetL, PetM and PetN. The complex functions as a dimer.

It is found in the cellular thylakoid membrane. Functionally, component of the cytochrome b6-f complex, which mediates electron transfer between photosystem II (PSII) and photosystem I (PSI), cyclic electron flow around PSI, and state transitions. This is Cytochrome b6-f complex subunit 7 from Prochlorococcus marinus (strain MIT 9515).